A 1486-amino-acid polypeptide reads, in one-letter code: Chromosome partition protein MukB (1486 aa).

34 to 41 (GGNGAGKS) is a binding site for ATP. Coiled-coil stretches lie at residues 326–418 (LEAD…QYNQ), 444–480 (LETFQAKELEATEKMLSLEQKMSMAQTAHSQFEQAYQ), and 509–603 (RHLA…RAPV). Positions 666 to 783 (PGGSEDQRLN…EVPLFGRAAR (118 aa)) are flexible hinge. Coiled-coil stretches lie at residues 835–923 (EAEI…AKLE), 977–1115 (EMLS…TAKA), and 1209–1266 (VEAI…QNVS).

It belongs to the SMC family. MukB subfamily. In terms of assembly, homodimerization via its hinge domain. Binds to DNA via its C-terminal region. Interacts, and probably forms a ternary complex, with MukE and MukF via its C-terminal region. The complex formation is stimulated by calcium or magnesium. Interacts with tubulin-related protein FtsZ.

It localises to the cytoplasm. The protein localises to the nucleoid. Its function is as follows. Plays a central role in chromosome condensation, segregation and cell cycle progression. Functions as a homodimer, which is essential for chromosome partition. Involved in negative DNA supercoiling in vivo, and by this means organize and compact chromosomes. May achieve or facilitate chromosome segregation by condensation DNA from both sides of a centrally located replisome during cell division. The protein is Chromosome partition protein MukB of Escherichia coli O9:H4 (strain HS).